A 245-amino-acid chain; its full sequence is 2,3-bisphosphoglycerate-dependent phosphoglycerate mutase (245 aa).

Substrate is bound by residues 8–15 (RHGQSLWN), 21–22 (TG), Arg-60, 87–90 (ERHY), Lys-98, 114–115 (RR), and 183–184 (GN). Catalysis depends on His-9, which acts as the Tele-phosphohistidine intermediate. Glu-87 acts as the Proton donor/acceptor in catalysis.

The protein belongs to the phosphoglycerate mutase family. BPG-dependent PGAM subfamily.

The catalysed reaction is (2R)-2-phosphoglycerate = (2R)-3-phosphoglycerate. It functions in the pathway carbohydrate degradation; glycolysis; pyruvate from D-glyceraldehyde 3-phosphate: step 3/5. Its function is as follows. Catalyzes the interconversion of 2-phosphoglycerate and 3-phosphoglycerate. The protein is 2,3-bisphosphoglycerate-dependent phosphoglycerate mutase of Bacillus anthracis (strain A0248).